The sequence spans 373 residues: tRNA-specific 2-thiouridylase MnmA (373 aa).

ATP contacts are provided by residues 12–19 (GMSGGVDS) and Met-38. The interval 98–100 (NPD) is interaction with target base in tRNA. The active-site Nucleophile is the Cys-103. The cysteines at positions 103 and 200 are disulfide-linked. Gly-127 provides a ligand contact to ATP. The interval 150 to 152 (KDQ) is interaction with tRNA. Cys-200 functions as the Cysteine persulfide intermediate in the catalytic mechanism. Residues 312–313 (RY) are interaction with tRNA.

Belongs to the MnmA/TRMU family.

The protein localises to the cytoplasm. The catalysed reaction is S-sulfanyl-L-cysteinyl-[protein] + uridine(34) in tRNA + AH2 + ATP = 2-thiouridine(34) in tRNA + L-cysteinyl-[protein] + A + AMP + diphosphate + H(+). Catalyzes the 2-thiolation of uridine at the wobble position (U34) of tRNA, leading to the formation of s(2)U34. This is tRNA-specific 2-thiouridylase MnmA from Streptococcus pyogenes serotype M18 (strain MGAS8232).